The following is a 379-amino-acid chain: DNA (cytosine-5)-methyltransferase (379 aa).

In terms of domain architecture, SAM-dependent MTase C5-type spans 4-366 (LRVLEFYSGI…KVLVSPNEEE (363 aa)). The active site involves Cys-78. The segment covering 178 to 192 (KKEQDKHNEKVDENK) has biased composition (basic and acidic residues). The interval 178–205 (KKEQDKHNEKVDENKLNNNSNNNNEQNK) is disordered. Over residues 193 to 203 (LNNNSNNNNEQ) the composition is skewed to low complexity.

It belongs to the class I-like SAM-binding methyltransferase superfamily. C5-methyltransferase family.

Its subcellular location is the nucleus. It carries out the reaction a 2'-deoxycytidine in DNA + S-adenosyl-L-methionine = a 5-methyl-2'-deoxycytidine in DNA + S-adenosyl-L-homocysteine + H(+). Its function is as follows. Involved in epigenetic gene silencing. Methylates specific cytosine residues in the retrotransposons DIRS-1 and Skipper. This chain is DNA (cytosine-5)-methyltransferase (dnmA), found in Dictyostelium discoideum (Social amoeba).